The chain runs to 494 residues: 4-trimethylaminobutyraldehyde dehydrogenase (494 aa).

At S2 the chain carries N-acetylserine; in 4-trimethylaminobutyraldehyde dehydrogenase, N-terminally processed. The residue at position 30 (K30) is an N6-acetyllysine; alternate. K30 carries the post-translational modification N6-succinyllysine; alternate. Position 59 is an N6-succinyllysine (K59). Residues K180 and 232-236 (GSVPT) contribute to the NAD(+) site. The Proton acceptor role is filled by E254. Catalysis depends on C288, which acts as the Nucleophile. K298 bears the N6-acetyllysine mark. K303 is subject to N6-acetyllysine; alternate. K303 is subject to N6-succinyllysine; alternate. K344 carries the post-translational modification N6-acetyllysine. Position 391 (E391) interacts with NAD(+).

The protein belongs to the aldehyde dehydrogenase family. In terms of assembly, homotetramer. As to expression, detected in brain (at protein level). High expression in adult liver, skeletal muscle, and kidney. Low levels in heart, pancreas, lung and brain. Expressed in all regions of the brain. Expression levels are variable in the different brain areas, with the highest levels in the spinal cord and the lowest in the occipital pole.

It localises to the cytoplasm. It is found in the cytosol. It catalyses the reaction 4-(trimethylamino)butanal + NAD(+) + H2O = 4-(trimethylamino)butanoate + NADH + 2 H(+). The enzyme catalyses an aldehyde + NAD(+) + H2O = a carboxylate + NADH + 2 H(+). It carries out the reaction 4-aminobutanal + NAD(+) + H2O = 4-aminobutanoate + NADH + 2 H(+). The catalysed reaction is formaldehyde + NAD(+) + H2O = formate + NADH + 2 H(+). It catalyses the reaction acetaldehyde + NAD(+) + H2O = acetate + NADH + 2 H(+). The enzyme catalyses imidazole-4-acetaldehyde + NAD(+) + H2O = imidazole-4-acetate + NADH + 2 H(+). It carries out the reaction acrolein + NAD(+) + H2O = acrylate + NADH + 2 H(+). The catalysed reaction is (5-hydroxyindol-3-yl)acetaldehyde + NAD(+) + H2O = (5-hydroxyindol-3-yl)acetate + NADH + 2 H(+). It catalyses the reaction 3,4-dihydroxyphenylacetaldehyde + NAD(+) + H2O = 3,4-dihydroxyphenylacetate + NADH + 2 H(+). The enzyme catalyses spermine monoaldehyde + NAD(+) + H2O = N-(2-carboxyethyl)spermidine + NADH + 2 H(+). It carries out the reaction propanal + NAD(+) + H2O = propanoate + NADH + 2 H(+). The catalysed reaction is butanal + NAD(+) + H2O = butanoate + NADH + 2 H(+). It catalyses the reaction pentanal + NAD(+) + H2O = pentanoate + NADH + 2 H(+). The enzyme catalyses hexanal + NAD(+) + H2O = hexanoate + NADH + 2 H(+). Its pathway is amine and polyamine biosynthesis; carnitine biosynthesis. Its function is as follows. Converts gamma-trimethylaminobutyraldehyde into gamma-butyrobetaine with high efficiency (in vitro). Can catalyze the irreversible oxidation of a broad range of aldehydes to the corresponding acids in an NAD-dependent reaction, but with low efficiency. Catalyzes the oxidation of aldehydes arising from biogenic amines and polyamines. This Homo sapiens (Human) protein is 4-trimethylaminobutyraldehyde dehydrogenase (ALDH9A1).